Reading from the N-terminus, the 400-residue chain is Phosphoglycerate kinase (400 aa).

Substrate-binding positions include 23–25 (DLN), arginine 38, 61–64 (HFGR), arginine 120, and arginine 153. Residues lysine 203, glutamate 325, and 355–358 (GGDT) each bind ATP.

This sequence belongs to the phosphoglycerate kinase family. Monomer.

It localises to the cytoplasm. It carries out the reaction (2R)-3-phosphoglycerate + ATP = (2R)-3-phospho-glyceroyl phosphate + ADP. It functions in the pathway carbohydrate degradation; glycolysis; pyruvate from D-glyceraldehyde 3-phosphate: step 2/5. This chain is Phosphoglycerate kinase, found in Methylobacterium radiotolerans (strain ATCC 27329 / DSM 1819 / JCM 2831 / NBRC 15690 / NCIMB 10815 / 0-1).